Reading from the N-terminus, the 683-residue chain is uncharacterized protein (683 aa).

3 coiled-coil regions span residues 62 to 124 (PEHY…RKER), 155 to 259 (TTTN…KLSQ), and 346 to 376 (KKSL…DGDV). The interval 213-237 (QDQVESQTGPKKRRKSPIENQPTAG) is disordered.

This is an uncharacterized protein from Invertebrate iridescent virus 3 (IIV-3).